The chain runs to 228 residues: Lipoprotein-releasing system ATP-binding protein LolD 2 (228 aa).

The ABC transporter domain maps to 9-228; it reads RGLERVYKTE…KDGHLELQRV (220 aa). ATP is bound at residue 42–49; that stretch reads GPSGSGKS.

This sequence belongs to the ABC transporter superfamily. Lipoprotein translocase (TC 3.A.1.125) family. As to quaternary structure, the complex is composed of two ATP-binding proteins (LolD) and two transmembrane proteins (LolC and LolE).

It is found in the cell inner membrane. In terms of biological role, part of the ABC transporter complex LolCDE involved in the translocation of mature outer membrane-directed lipoproteins, from the inner membrane to the periplasmic chaperone, LolA. Responsible for the formation of the LolA-lipoprotein complex in an ATP-dependent manner. The sequence is that of Lipoprotein-releasing system ATP-binding protein LolD 2 from Caulobacter vibrioides (strain ATCC 19089 / CIP 103742 / CB 15) (Caulobacter crescentus).